Here is a 490-residue protein sequence, read N- to C-terminus: UDP-N-acetylmuramate--L-alanine ligase (490 aa).

An ATP-binding site is contributed by 126–132; sequence GTHGKTT.

This sequence belongs to the MurCDEF family.

It localises to the cytoplasm. The enzyme catalyses UDP-N-acetyl-alpha-D-muramate + L-alanine + ATP = UDP-N-acetyl-alpha-D-muramoyl-L-alanine + ADP + phosphate + H(+). It functions in the pathway cell wall biogenesis; peptidoglycan biosynthesis. Its function is as follows. Cell wall formation. The chain is UDP-N-acetylmuramate--L-alanine ligase from Baumannia cicadellinicola subsp. Homalodisca coagulata.